The sequence spans 199 residues: FMN-dependent NADH:quinone oxidoreductase (199 aa).

FMN is bound by residues Ser-10, 16 to 18 (SVS), and 96 to 99 (MYNF).

The protein belongs to the azoreductase type 1 family. Homodimer. FMN serves as cofactor.

The enzyme catalyses 2 a quinone + NADH + H(+) = 2 a 1,4-benzosemiquinone + NAD(+). It catalyses the reaction N,N-dimethyl-1,4-phenylenediamine + anthranilate + 2 NAD(+) = 2-(4-dimethylaminophenyl)diazenylbenzoate + 2 NADH + 2 H(+). Quinone reductase that provides resistance to thiol-specific stress caused by electrophilic quinones. Its function is as follows. Also exhibits azoreductase activity. Catalyzes the reductive cleavage of the azo bond in aromatic azo compounds to the corresponding amines. This chain is FMN-dependent NADH:quinone oxidoreductase, found in Azotobacter vinelandii (strain DJ / ATCC BAA-1303).